The primary structure comprises 325 residues: GMP reductase (325 aa).

The Thioimidate intermediate role is filled by Cys-173. Position 202–225 (202–225) interacts with NADP(+); it reads IIADGGIHEHGDIAKSIRFGATMV.

This sequence belongs to the IMPDH/GMPR family. GuaC type 2 subfamily.

The catalysed reaction is IMP + NH4(+) + NADP(+) = GMP + NADPH + 2 H(+). Catalyzes the irreversible NADPH-dependent deamination of GMP to IMP. It functions in the conversion of nucleobase, nucleoside and nucleotide derivatives of G to A nucleotides, and in maintaining the intracellular balance of A and G nucleotides. This is GMP reductase from Albidiferax ferrireducens (strain ATCC BAA-621 / DSM 15236 / T118) (Rhodoferax ferrireducens).